The sequence spans 366 residues: Ribosomal RNA large subunit methyltransferase M (366 aa).

S-adenosyl-L-methionine contacts are provided by residues serine 188, 221 to 224, aspartate 240, aspartate 260, and aspartate 277; that span reads CPGG. Lysine 306 (proton acceptor) is an active-site residue.

Belongs to the class I-like SAM-binding methyltransferase superfamily. RNA methyltransferase RlmE family. RlmM subfamily. Monomer.

Its subcellular location is the cytoplasm. The enzyme catalyses cytidine(2498) in 23S rRNA + S-adenosyl-L-methionine = 2'-O-methylcytidine(2498) in 23S rRNA + S-adenosyl-L-homocysteine + H(+). Its function is as follows. Catalyzes the 2'-O-methylation at nucleotide C2498 in 23S rRNA. This Sodalis glossinidius (strain morsitans) protein is Ribosomal RNA large subunit methyltransferase M.